The primary structure comprises 281 residues: CLA biosynthesis isomerase (281 aa).

This sequence belongs to the ADC family.

The protein resides in the cytoplasm. The enzyme catalyses 10-oxo-(12Z)-octadecenoate = 10-oxo-(11E)-octadecenoate. It functions in the pathway lipid metabolism; fatty acid metabolism. Functionally, is involved in a saturation metabolic pathway of polyunsaturated fatty acids, that detoxifies unsaturated fatty acids and generates hydroxy fatty acids, oxo fatty acids, conjugated fatty acids such as conjugated linoleic acids (CLAs), and partially saturated trans-fatty acids as intermediates. CLA-DC catalyzes the migration of the carbon-carbon double bond in 10-oxo-(12Z)-octadecenoate to produce 10-oxo-(11E)-octadecenoate, during linoleate metabolism. As part of the gut microbiome, this enzyme modifies host fatty acid composition and is expected to improve human health by altering lipid metabolism related to the onset of metabolic syndrome. The polypeptide is CLA biosynthesis isomerase (Lactiplantibacillus plantarum (Lactobacillus plantarum)).